Here is a 617-residue protein sequence, read N- to C-terminus: Chaperone protein HscA homolog (617 aa).

Positions 1 to 23 (MALLQIAEPGQSSAPHEHKRAAG) are disordered.

This sequence belongs to the heat shock protein 70 family.

Functionally, chaperone involved in the maturation of iron-sulfur cluster-containing proteins. Has a low intrinsic ATPase activity which is markedly stimulated by HscB. This is Chaperone protein HscA homolog from Vibrio vulnificus (strain YJ016).